Reading from the N-terminus, the 162-residue chain is Ribonuclease (162 aa).

The N-terminal stretch at 1-29 (MKKISSVFTMFALIAAILFSGFIPQQAYA) is a signal peptide. A propeptide spanning residues 30 to 53 (ETTLTPTATNKTASIQLTSDVHTL) is cleaved from the precursor. E125 acts as the Proton acceptor in catalysis. Catalysis depends on H154, which acts as the Proton donor.

It belongs to the ribonuclease N1/T1 family.

The protein resides in the secreted. In terms of biological role, this is a purine-specific ribonuclease. In Bacillus pumilus (Bacillus mesentericus), this protein is Ribonuclease.